The sequence spans 515 residues: Pescadillo homolog (515 aa).

Residues 270–327 (EVLAALNHTLKIIQTQEEDLEVDEFPIDPNSEDAEAIQAQKEEETKLERLKNLFSECK) are a coiled coil. One can recognise a BRCT domain in the interval 318 to 411 (RLKNLFSECK…KLLPVEEYFP (94 aa)). The tract at residues 477 to 515 (RLYEKIMHSKKKKRSEVRKLESKRKVHDEEKAKKKLKSS) is disordered. The span at 484-501 (HSKKKKRSEVRKLESKRK) shows a compositional bias: basic residues.

Belongs to the pescadillo family.

The protein localises to the nucleus. The protein resides in the nucleolus. It localises to the nucleoplasm. Required for maturation of ribosomal RNAs and formation of the large ribosomal subunit. The polypeptide is Pescadillo homolog (Nematostella vectensis (Starlet sea anemone)).